Consider the following 89-residue polypeptide: Small ribosomal subunit protein uS15 (89 aa).

Belongs to the universal ribosomal protein uS15 family. As to quaternary structure, part of the 30S ribosomal subunit. Forms a bridge to the 50S subunit in the 70S ribosome, contacting the 23S rRNA.

Its function is as follows. One of the primary rRNA binding proteins, it binds directly to 16S rRNA where it helps nucleate assembly of the platform of the 30S subunit by binding and bridging several RNA helices of the 16S rRNA. Forms an intersubunit bridge (bridge B4) with the 23S rRNA of the 50S subunit in the ribosome. The protein is Small ribosomal subunit protein uS15 of Micrococcus luteus (strain ATCC 4698 / DSM 20030 / JCM 1464 / CCM 169 / CCUG 5858 / IAM 1056 / NBRC 3333 / NCIMB 9278 / NCTC 2665 / VKM Ac-2230) (Micrococcus lysodeikticus).